A 218-amino-acid polypeptide reads, in one-letter code: Elongation factor Ts (218 aa).

Positions 82-85 are involved in Mg(2+) ion dislocation from EF-Tu; that stretch reads TDFV.

The protein belongs to the EF-Ts family.

The protein resides in the cytoplasm. Associates with the EF-Tu.GDP complex and induces the exchange of GDP to GTP. It remains bound to the aminoacyl-tRNA.EF-Tu.GTP complex up to the GTP hydrolysis stage on the ribosome. The protein is Elongation factor Ts of Prochlorococcus marinus (strain MIT 9312).